The chain runs to 550 residues: Protein UshA (550 aa).

Residues Met-1 to Ala-25 form the signal peptide. Zn(2+) contacts are provided by Asp-41, His-43, Asp-84, Asn-116, His-217, His-252, and Gln-254. A disulfide bond links Cys-258 and Cys-275. Substrate contacts are provided by residues Arg-375–Arg-379 and Phe-498–Asp-504.

The protein belongs to the 5'-nucleotidase family. Monomer. Zn(2+) is required as a cofactor.

The protein resides in the periplasm. It catalyses the reaction UDP-sugar + H2O = UMP + alpha-D-aldose 1-phosphate.. It carries out the reaction a ribonucleoside 5'-phosphate + H2O = a ribonucleoside + phosphate. The activity of this protein is inhibited by an intracellular protein inhibitor. Degradation of external UDP-glucose to uridine monophosphate and glucose-1-phosphate, which can then be used by the cell. This is Protein UshA (ushA) from Escherichia coli (strain K12).